The sequence spans 526 residues: O-phosphoserine--tRNA(Cys) ligase (526 aa).

Substrate-binding positions include 189–191, 234–236, 276–277, and Asn319; these read HMT, SAS, and YY.

This sequence belongs to the class-II aminoacyl-tRNA synthetase family. O-phosphoseryl-tRNA(Cys) synthetase subfamily. In terms of assembly, homotetramer. Interacts with SepCysS.

It catalyses the reaction tRNA(Cys) + O-phospho-L-serine + ATP = O-phospho-L-seryl-tRNA(Cys) + AMP + diphosphate. Catalyzes the attachment of O-phosphoserine (Sep) to tRNA(Cys). This is O-phosphoserine--tRNA(Cys) ligase from Methanocorpusculum labreanum (strain ATCC 43576 / DSM 4855 / Z).